The primary structure comprises 451 residues: L-seryl-tRNA(Sec) selenium transferase (451 aa).

Lysine 286 is subject to N6-(pyridoxal phosphate)lysine.

It belongs to the SelA family. The cofactor is pyridoxal 5'-phosphate.

It localises to the cytoplasm. The catalysed reaction is L-seryl-tRNA(Sec) + selenophosphate + H(+) = L-selenocysteinyl-tRNA(Sec) + phosphate. Its pathway is aminoacyl-tRNA biosynthesis; selenocysteinyl-tRNA(Sec) biosynthesis; selenocysteinyl-tRNA(Sec) from L-seryl-tRNA(Sec) (bacterial route): step 1/1. Converts seryl-tRNA(Sec) to selenocysteinyl-tRNA(Sec) required for selenoprotein biosynthesis. This Aliarcobacter butzleri (strain RM4018) (Arcobacter butzleri) protein is L-seryl-tRNA(Sec) selenium transferase.